The following is a 347-amino-acid chain: NADH-ubiquinone oxidoreductase chain 2 (347 aa).

11 consecutive transmembrane segments (helical) span residues 3–23 (PLIMSIILATIILGTTIVMTG), 25–45 (HWLMIWIGFEMNMLAIIPMLM), 59–79 (YFFTQATASMLLMLAGIINLM), 96–116 (IIMTLALAMKLGLAPFHFWVP), 127–147 (GLILLTWQKLASMTGLYMISP), 148–168 (GINLNMLMTMSMLSIAIGGWG), 178–198 (IMAYSSIAHMGWMTAILIYNP), 201–221 (TLLNLVIYILMTTTMFMLFMI), 247–267 (TLLSMGGLPPLMGFLPKWMII), 276–296 (IVLPTIMAITALLNLFFYMRL), and 325–345 (LLTPMIMMSTLTLPLAPMMMI).

Belongs to the complex I subunit 2 family. As to quaternary structure, core subunit of respiratory chain NADH dehydrogenase (Complex I) which is composed of 45 different subunits. Interacts with TMEM242.

It localises to the mitochondrion inner membrane. It catalyses the reaction a ubiquinone + NADH + 5 H(+)(in) = a ubiquinol + NAD(+) + 4 H(+)(out). Functionally, core subunit of the mitochondrial membrane respiratory chain NADH dehydrogenase (Complex I) which catalyzes electron transfer from NADH through the respiratory chain, using ubiquinone as an electron acceptor. Essential for the catalytic activity and assembly of complex I. The polypeptide is NADH-ubiquinone oxidoreductase chain 2 (Ozimops beccarii (Beccari's free-tailed bat)).